The primary structure comprises 444 residues: Platelet-activating factor acetylhydrolase (444 aa).

The signal sequence occupies residues Met-1 to Pro-21. Asn-60 and Asn-200 each carry an N-linked (GlcNAc...) asparagine glycan. The Nucleophile role is filled by Ser-274. Catalysis depends on charge relay system residues Asp-297 and His-352. Asn-424 and Asn-434 each carry an N-linked (GlcNAc...) asparagine glycan.

Belongs to the AB hydrolase superfamily. Lipase family. In terms of processing, N-glycosylated. Plasma.

The protein resides in the secreted. Its subcellular location is the extracellular space. It carries out the reaction a 1-O-alkyl-2-acetyl-sn-glycero-3-phosphocholine + H2O = a 1-O-alkyl-sn-glycero-3-phosphocholine + acetate + H(+). The catalysed reaction is 1-O-decyl-2-acetyl-sn-glycero-3-phosphocholine + H2O = 1-O-decyl-sn-glycero-3-phosphocholine + acetate + H(+). It catalyses the reaction 1-O-dodecyl-2-acetyl-sn-glycero-3-phosphocholine + H2O = 1-O-dodecyl-sn-glycero-3-phosphocholine + acetate + H(+). The enzyme catalyses 1-O-tetradecyl-2-acetyl-sn-glycero-3-phosphocholine + H2O = 1-O-tetradecyl-sn-glycero-3-phosphocholine + acetate + H(+). It carries out the reaction 1-O-hexadecyl-2-acetyl-sn-glycero-3-phosphocholine + H2O = 1-O-hexadecyl-sn-glycero-3-phosphocholine + acetate + H(+). The catalysed reaction is 1-O-octadecyl-2-acetyl-sn-glycero-3-phosphocholine + H2O = 1-O-octadecyl-sn-glycero-3-phosphocholine + acetate + H(+). It catalyses the reaction 1-hexadecanoyl-2-acetyl-sn-glycero-3-phosphocholine + H2O = 1-hexadecanoyl-sn-glycero-3-phosphocholine + acetate + H(+). The enzyme catalyses 1-hexadecanoyl-2-propionyl-sn-glycero-3-phosphocholine + H2O = propanoate + 1-hexadecanoyl-sn-glycero-3-phosphocholine + H(+). It carries out the reaction 1-hexadecanoyl-2-butanoyl-sn-glycero-3-phosphocholine + H2O = butanoate + 1-hexadecanoyl-sn-glycero-3-phosphocholine + H(+). The catalysed reaction is 1-hexadecanoyl-2-pentanoyl-sn-glycero-3-phosphocholine + H2O = pentanoate + 1-hexadecanoyl-sn-glycero-3-phosphocholine + H(+). It catalyses the reaction 1-hexadecanoyl-2-glutaroyl-sn-glycero-3-phosphocholine + H2O = glutarate + 1-hexadecanoyl-sn-glycero-3-phosphocholine + H(+). The enzyme catalyses 1-hexadecanoyl-2-(5-oxopentanoyl)-sn-glycero-3-phosphocholine + H2O = 5-oxopentanoate + 1-hexadecanoyl-sn-glycero-3-phosphocholine + H(+). It carries out the reaction 1-hexadecanoyl-2-(9-oxononanoyl)-sn-glycero-3-phosphocholine + H2O = 9-oxononanoate + 1-hexadecanoyl-sn-glycero-3-phosphocholine + H(+). The catalysed reaction is 1-hexadecanoyl-2-[9-hydroperoxy-(10E-octadecenoyl)]-sn-glycero-3-phosphocholine + H2O = 9-hydroperoxy-10E-octadecenoate + 1-hexadecanoyl-sn-glycero-3-phosphocholine + H(+). It catalyses the reaction 1-hexadecanoyl-2-(10-hydroperoxy-8E-octadecenoyl)-sn-glycero-3-phosphocholine + H2O = 10-hydroperoxy-(8E)-octadecenoate + 1-hexadecanoyl-sn-glycero-3-phosphocholine + H(+). In terms of biological role, lipoprotein-associated calcium-independent phospholipase A2 involved in phospholipid catabolism during inflammatory and oxidative stress response. At the lipid-aqueous interface, hydrolyzes the ester bond of fatty acyl group attached at sn-2 position of phospholipids (phospholipase A2 activity). Specifically targets phospholipids with a short-chain fatty acyl group at sn-2 position. Can hydrolyze phospholipids with long fatty acyl chains, only if they carry oxidized functional groups. Hydrolyzes and inactivates platelet-activating factor (PAF, 1-O-alkyl-2-acetyl-sn-glycero-3-phosphocholine), a potent pro-inflammatory signaling lipid that acts through PTAFR on various innate immune cells. Hydrolyzes oxidatively truncated phospholipids carrying an aldehyde group at omega position, preventing their accumulation in low-density lipoprotein (LDL) particles and uncontrolled pro-inflammatory effects. As part of high-density lipoprotein (HDL) particles, can hydrolyze phospholipids having long-chain fatty acyl hydroperoxides at sn-2 position and protect against potential accumulation of these oxylipins in the vascular wall. Catalyzes the release from membrane phospholipids of F2-isoprostanes, lipid biomarkers of cellular oxidative damage. The polypeptide is Platelet-activating factor acetylhydrolase (PLA2G7) (Bos taurus (Bovine)).